We begin with the raw amino-acid sequence, 204 residues long: Dephospho-CoA kinase (204 aa).

A DPCK domain is found at 13-204 (RIGLTGGIAS…LWKNTIKKLV (192 aa)). Position 21–26 (21–26 (ASGKST)) interacts with ATP.

The protein belongs to the CoaE family.

Its subcellular location is the cytoplasm. It catalyses the reaction 3'-dephospho-CoA + ATP = ADP + CoA + H(+). The protein operates within cofactor biosynthesis; coenzyme A biosynthesis; CoA from (R)-pantothenate: step 5/5. Catalyzes the phosphorylation of the 3'-hydroxyl group of dephosphocoenzyme A to form coenzyme A. The chain is Dephospho-CoA kinase from Prochlorococcus marinus subsp. pastoris (strain CCMP1986 / NIES-2087 / MED4).